We begin with the raw amino-acid sequence, 513 residues long: 2,3-bisphosphoglycerate-independent phosphoglycerate mutase (513 aa).

The Mn(2+) site is built by aspartate 12 and serine 62. Serine 62 (phosphoserine intermediate) is an active-site residue. Substrate-binding positions include histidine 123, 153-154 (RD), arginine 185, arginine 191, 261-264 (RSDR), and lysine 335. Mn(2+)-binding residues include aspartate 402, histidine 406, aspartate 443, histidine 444, and histidine 462.

This sequence belongs to the BPG-independent phosphoglycerate mutase family. As to quaternary structure, monomer. It depends on Mn(2+) as a cofactor.

It catalyses the reaction (2R)-2-phosphoglycerate = (2R)-3-phosphoglycerate. Its pathway is carbohydrate degradation; glycolysis; pyruvate from D-glyceraldehyde 3-phosphate: step 3/5. In terms of biological role, catalyzes the interconversion of 2-phosphoglycerate and 3-phosphoglycerate. The protein is 2,3-bisphosphoglycerate-independent phosphoglycerate mutase of Thiobacillus denitrificans (strain ATCC 25259 / T1).